A 687-amino-acid polypeptide reads, in one-letter code: Homeobox-leucine zipper protein HDG12 (687 aa).

Residues 1–32 are disordered; that stretch reads MEFLGDSQNHDSSETEKKNKKKKRFHRHTPHQ. Basic and acidic residues predominate over residues 8–17; it reads QNHDSSETEK. Residues 18–30 are compositionally biased toward basic residues; that stretch reads KNKKKKRFHRHTP. The segment at residues 21 to 80 is a DNA-binding region (homeobox); the sequence is KKKRFHRHTPHQIQRLESTFNECQHPDEKQRNQLSRELGLAPRQIKFWFQNRRTQKKAQH. Positions 87-150 form a coiled coil; it reads ALKEENDKIR…LERVSSIAAK (64 aa). The 235-residue stretch at 206 to 440 folds into the START domain; that stretch reads SEMDKSLMTN…LQRMCERFTN (235 aa).

Belongs to the HD-ZIP homeobox family. Class IV subfamily. As to quaternary structure, interacts with BBM. As to expression, expressed in apical meristems and young epidermal tissue including trichomes and stipules. Expressed in lateral root tips, the L1 layer of apical inflorescence meristems and early flower primordia, carpel and stamen filament epidermis, stigma papillae, ovule primordia, nucellus and embryo.

It localises to the nucleus. Functionally, probable transcription factor that acts as a negative regulator of trichome branching in association with HDG11. Seems to promote cell differentiation. May regulate cell differentiation and proliferation during root and shoot meristem development. Acts as a positive regulator of SCL18/LAS expression. Involved, together with PDF2, in the regulation of flower organs development by promoting the expression of APETALA 3 (AP3) in the epidermis and internal cell layers of developing flowers. The chain is Homeobox-leucine zipper protein HDG12 from Arabidopsis thaliana (Mouse-ear cress).